The sequence spans 310 residues: Translocator protein BipD (310 aa).

Coiled coils occupy residues Asp127–Tyr171 and Asp250–Thr299.

It belongs to the invasin protein D family.

The protein resides in the secreted. In terms of biological role, required for invasion of epithelial cells, as well as for survival within host cells, escape from endocytic vesicles and subsequent actin-tail formation. Probably regulates the secretion of effectors BipB and BipC and their final integration into the target cell membrane. This chain is Translocator protein BipD (bipD), found in Burkholderia thailandensis (strain ATCC 700388 / DSM 13276 / CCUG 48851 / CIP 106301 / E264).